The primary structure comprises 76 residues: Protein sprouty homolog 1 (76 aa).

One can recognise an SPR domain in the interval 1-52 (NPCSCSQSHCCSRYLCMGAMSLFLPCLLCYPPAKGCLKLCRGCYDRVNRPGC).

The protein belongs to the sprouty family. As to expression, brain and interlimb region.

It is found in the cytoplasm. It localises to the membrane. In terms of biological role, inhibits fibroblast growth factor (FGF)-induced retinal lens fiber differentiation. Inhibits TGFB-induced epithelial-to-mesenchymal transition in lens epithelial cells. This Gallus gallus (Chicken) protein is Protein sprouty homolog 1 (SPRY1).